Consider the following 346-residue polypeptide: Holliday junction branch migration complex subunit RuvB (346 aa).

The segment at 1-182 (MSERLVTSNE…LGVLCSMEYY (182 aa)) is large ATPase domain (RuvB-L). ATP is bound by residues L21, R22, G63, K66, T67, T68, 129–131 (EDY), R172, Y182, and R219. T67 lines the Mg(2+) pocket. The tract at residues 183–253 (TDEQLKEIII…AAKKSLEILE (71 aa)) is small ATPAse domain (RuvB-S). Positions 256 to 346 (GEGFDRIDNK…DSKQCTLFEK (91 aa)) are head domain (RuvB-H). Positions 311 and 316 each coordinate DNA.

It belongs to the RuvB family. In terms of assembly, homohexamer. Forms an RuvA(8)-RuvB(12)-Holliday junction (HJ) complex. HJ DNA is sandwiched between 2 RuvA tetramers; dsDNA enters through RuvA and exits via RuvB. An RuvB hexamer assembles on each DNA strand where it exits the tetramer. Each RuvB hexamer is contacted by two RuvA subunits (via domain III) on 2 adjacent RuvB subunits; this complex drives branch migration. In the full resolvosome a probable DNA-RuvA(4)-RuvB(12)-RuvC(2) complex forms which resolves the HJ.

The protein localises to the cytoplasm. It carries out the reaction ATP + H2O = ADP + phosphate + H(+). Its function is as follows. The RuvA-RuvB-RuvC complex processes Holliday junction (HJ) DNA during genetic recombination and DNA repair, while the RuvA-RuvB complex plays an important role in the rescue of blocked DNA replication forks via replication fork reversal (RFR). RuvA specifically binds to HJ cruciform DNA, conferring on it an open structure. The RuvB hexamer acts as an ATP-dependent pump, pulling dsDNA into and through the RuvAB complex. RuvB forms 2 homohexamers on either side of HJ DNA bound by 1 or 2 RuvA tetramers; 4 subunits per hexamer contact DNA at a time. Coordinated motions by a converter formed by DNA-disengaged RuvB subunits stimulates ATP hydrolysis and nucleotide exchange. Immobilization of the converter enables RuvB to convert the ATP-contained energy into a lever motion, pulling 2 nucleotides of DNA out of the RuvA tetramer per ATP hydrolyzed, thus driving DNA branch migration. The RuvB motors rotate together with the DNA substrate, which together with the progressing nucleotide cycle form the mechanistic basis for DNA recombination by continuous HJ branch migration. Branch migration allows RuvC to scan DNA until it finds its consensus sequence, where it cleaves and resolves cruciform DNA. The polypeptide is Holliday junction branch migration complex subunit RuvB (Clostridium perfringens (strain 13 / Type A)).